Here is a 204-residue protein sequence, read N- to C-terminus: Large ribosomal subunit protein bL25 (204 aa).

It belongs to the bacterial ribosomal protein bL25 family. CTC subfamily. As to quaternary structure, part of the 50S ribosomal subunit; part of the 5S rRNA/L5/L18/L25 subcomplex. Contacts the 5S rRNA. Binds to the 5S rRNA independently of L5 and L18.

Functionally, this is one of the proteins that binds to the 5S RNA in the ribosome where it forms part of the central protuberance. This Burkholderia pseudomallei (strain 668) protein is Large ribosomal subunit protein bL25.